The chain runs to 990 residues: Transposase for transposon Tn3926 (990 aa).

The interval 673–698 is disordered; it reads GDGTTSSSDGQNFRTGSKAESTGHIN. A compositionally biased stretch (polar residues) spans 674-696; that stretch reads DGTTSSSDGQNFRTGSKAESTGH.

Belongs to the transposase 7 family.

Required for transposition of transposon Tn3926. This is Transposase for transposon Tn3926 (tnpA) from Escherichia coli.